A 215-amino-acid chain; its full sequence is Eukaryotic translation initiation factor 4E-1 (215 aa).

Residues 1 to 32 (MAEDTETRPASAGAEEREEGEIADDGDGSSAA) are disordered. The segment covering 16-27 (EREEGEIADDGD) has biased composition (acidic residues). EIF4G-binding stretches follow at residues 40 to 43 (HPLE) and 50 to 86 (FDNPQGKSRQVAWGSTIHPIHTFSTVEDFWGLYNNIH). Residues 58 to 63 (RQVAWG), K90, and 108 to 109 (WE) each bind mRNA. C113 and C151 are disulfide-bonded. Positions 134 to 143 (HTLLAMIGEQ) are EIF4G-binding. MRNA-binding positions include 158–163 (RQKQER) and 203–207 (KRSDK).

Belongs to the eukaryotic initiation factor 4E family. In terms of assembly, EIF4F is a multi-subunit complex, the composition of which varies with external and internal environmental conditions. It is composed of at least EIF4A, EIF4E and EIF4G. EIF4E is also known to interact with other partners. In higher plants two isoforms of EIF4F have been identified, named isoform EIF4F and isoform EIF(iso)4F. Isoform EIF4F has subunits p220 and p26, whereas isoform EIF(iso)4F has subunits p82 and p28. Post-translationally, according to the redox status, the Cys-113-Cys-151 disulfide bridge may have a role in regulating protein function by affecting its ability to bind capped mRNA.

Its subcellular location is the nucleus. The protein resides in the cytoplasm. Functionally, component of the protein complex eIF4F, which is involved in the recognition of the mRNA cap, ATP-dependent unwinding of 5'-terminal secondary structure and recruitment of mRNA to the ribosome. Recognizes and binds the 7-methylguanosine-containing mRNA cap during an early step in the initiation of protein synthesis and facilitates ribosome binding by inducing the unwinding of the mRNAs secondary structures. The polypeptide is Eukaryotic translation initiation factor 4E-1 (Triticum aestivum (Wheat)).